Here is a 204-residue protein sequence, read N- to C-terminus: Holliday junction branch migration complex subunit RuvA (204 aa).

The segment at 1 to 63 (MIASLRGTVI…EDAMKLYGFI (63 aa)) is domain I. The segment at 64–142 (DDQSREMFAL…AYTVGVVDDG (79 aa)) is domain II. Residues 143–151 (APTAPTQGV) form a flexible linker region. Residues 152–204 (APVVVVDQVTQALTGLGFTEKQADDAVAAVLSADPGLDTSAALRAALAKLGGK) form a domain III region.

It belongs to the RuvA family. In terms of assembly, homotetramer. Forms an RuvA(8)-RuvB(12)-Holliday junction (HJ) complex. HJ DNA is sandwiched between 2 RuvA tetramers; dsDNA enters through RuvA and exits via RuvB. An RuvB hexamer assembles on each DNA strand where it exits the tetramer. Each RuvB hexamer is contacted by two RuvA subunits (via domain III) on 2 adjacent RuvB subunits; this complex drives branch migration. In the full resolvosome a probable DNA-RuvA(4)-RuvB(12)-RuvC(2) complex forms which resolves the HJ.

It is found in the cytoplasm. Its function is as follows. The RuvA-RuvB-RuvC complex processes Holliday junction (HJ) DNA during genetic recombination and DNA repair, while the RuvA-RuvB complex plays an important role in the rescue of blocked DNA replication forks via replication fork reversal (RFR). RuvA specifically binds to HJ cruciform DNA, conferring on it an open structure. The RuvB hexamer acts as an ATP-dependent pump, pulling dsDNA into and through the RuvAB complex. HJ branch migration allows RuvC to scan DNA until it finds its consensus sequence, where it cleaves and resolves the cruciform DNA. This is Holliday junction branch migration complex subunit RuvA from Corynebacterium efficiens (strain DSM 44549 / YS-314 / AJ 12310 / JCM 11189 / NBRC 100395).